The primary structure comprises 247 residues: Adiponectin (247 aa).

Positions 1 to 17 are cleaved as a signal peptide; the sequence is MLLLQALLFLLILPSHA. O-linked (GalNAc...) threonine glycans are attached at residues threonine 23 and threonine 24. At lysine 36 the chain carries 5-hydroxylysine. S-(2-succinyl)cysteine is present on cysteine 39. Residues 44 to 105 are disordered; sequence AGIPGHPGHN…GFPGTPGRKG (62 aa). The region spanning 45-110 is the Collagen-like domain; that stretch reads GIPGHPGHNG…PGRKGEPGEA (66 aa). Residues proline 47, proline 50, and proline 56 each carry the 4-hydroxyproline modification. Residues 58–73 show a composition bias toward basic and acidic residues; sequence RDGRDGTPGEKGEKGD. Lysine 68, lysine 71, and lysine 80 each carry 5-hydroxylysine; alternate. O-linked (Gal...) hydroxylysine; alternate glycans are attached at residues lysine 68, lysine 71, and lysine 80. Position 94 is a 4-hydroxyproline (proline 94). A 5-hydroxylysine; alternate modification is found at lysine 104. The O-linked (Gal...) hydroxylysine; alternate glycan is linked to lysine 104. The C1q domain maps to 111–247; the sequence is AYVYRSAFSV…TGFLLYHDTN (137 aa).

In terms of assembly, homomultimer. Forms trimers, hexamers and 12- to 18-mers. The trimers (low molecular weight complexes / LMW) are assembled via non-covalent interactions of the collagen-like domains in a triple helix and hydrophobic interactions within the globular C1q domain. Several trimers can associate to form disulfide-linked hexamers (middle molecular weight complexes / MMW) and larger complexes (higher molecular weight / HMW). The HMW-complex assembly is also modulated by the degree of lysine hydroxylation and glycosylation. LMW, MMW and HMW complexes bind to HBEGF, MMW and HMW complexes bind to PDGFB, and HMW complex binds to FGF2. Interacts with CTRP9 via the C1q domain (heterotrimeric complex). Post-translationally, HMW complexes are more extensively glycosylated than smaller oligomers. Hydroxylation and glycosylation of the lysine residues within the collagen-like domain of adiponectin seem to be critically involved in regulating the formation and/or secretion of HMW complexes and consequently contribute to the insulin-sensitizing activity of adiponectin in hepatocytes. In terms of processing, O-glycosylated. Not N-glycosylated O-linked glycans on hydroxylysine residues consist of Glc-Gal disaccharides bound to the oxygen atom of post-translationally added hydroxyl groups. O-linked glycosylation in the N-terminal is disialylated with the structure Neu5Acalpha2-&gt;8Neu5Acalpha2-&gt;3Gal. Sialylated by alpha 2,8-sialyltransferase III. Succination of Cys-39 by the Krebs cycle intermediate fumarate, which leads to S-(2-succinyl)cysteine residues, inhibits polymerization and secretion of adiponectin. Adiponectin is a major target for succination in both adipocytes and adipose tissue of diabetic mice. It was proposed that succination of proteins is a biomarker of mitochondrial stress and accumulation of Krebs cycle intermediates in adipose tissue in diabetes and that succination of adiponectin may contribute to the decrease in plasma adiponectin in diabetes. In terms of tissue distribution, synthesized exclusively by adipocytes and secreted into plasma.

It is found in the secreted. Its activity is regulated as follows. Polymerization and secretion of adiponectin is inhibited by succination of cysteine residues by the Krebs cycle intermediate fumarate, which leads to S-(2-succinyl)cysteine residues. Functionally, important adipokine involved in the control of fat metabolism and insulin sensitivity, with direct anti-diabetic, anti-atherogenic and anti-inflammatory activities. Stimulates AMPK phosphorylation and activation in the liver and the skeletal muscle, enhancing glucose utilization and fatty-acid combustion. Antagonizes TNF-alpha by negatively regulating its expression in various tissues such as liver and macrophages, and also by counteracting its effects. Inhibits endothelial NF-kappa-B signaling through a cAMP-dependent pathway. May play a role in cell growth, angiogenesis and tissue remodeling by binding and sequestering various growth factors with distinct binding affinities, depending on the type of complex, LMW, MMW or HMW. The sequence is that of Adiponectin (Adipoq) from Mus musculus (Mouse).